Here is a 142-residue protein sequence, read N- to C-terminus: Transcription antitermination protein NusB (142 aa).

This sequence belongs to the NusB family.

Its function is as follows. Involved in transcription antitermination. Required for transcription of ribosomal RNA (rRNA) genes. Binds specifically to the boxA antiterminator sequence of the ribosomal RNA (rrn) operons. This is Transcription antitermination protein NusB from Roseiflexus castenholzii (strain DSM 13941 / HLO8).